The chain runs to 318 residues: MGRKIVVALGGNAILSKDASAAAQQQALMDTAKHLVKFIENGDQLIISHGNGPQVGNLLLQQSAGSTEENPAMPLDTAVAMTQGSIGYWMQNAMNQVLKEKGLNKTVATVVTQVEVSADDPAFTNPTKPIGPFMSKDEADLAKKENPDFTFVEDAGRGYRRVVPSPKPIGVVETDAVNTLVDAGIVPISVGGGGIPVVADGNQLLGREAVIDKDFASEKLAELVGADALIILTAVPNIYVNFNKPNQKKLEHVSVNDLETYISEKQFAPGSMLPKVQAAIDFVKATGNEAVVTALDNIEGFVNEGSGTVITKKVRQQA.

The protein belongs to the carbamate kinase family.

Its subcellular location is the cytoplasm. It carries out the reaction hydrogencarbonate + NH4(+) + ATP = carbamoyl phosphate + ADP + H2O + H(+). Its pathway is metabolic intermediate metabolism; carbamoyl phosphate degradation; CO(2) and NH(3) from carbamoyl phosphate: step 1/1. The protein is Carbamate kinase (arcC) of Lentilactobacillus hilgardii (Lactobacillus hilgardii).